A 97-amino-acid chain; its full sequence is Small nuclear ribonucleoprotein Sm D3 (97 aa).

Residues 3–75 (LCIKLLHETQ…IRFLIVPDML (73 aa)) enclose the Sm domain.

This sequence belongs to the snRNP core protein family. In terms of assembly, belongs to the 40S cdc5-associated complex (or cwf complex), a spliceosome sub-complex reminiscent of a late-stage spliceosome composed of the U2, U5 and U6 snRNAs and at least brr2, cdc5, cwf2/prp3, cwf3/syf1, cwf4/syf3, cwf5/ecm2, spp42/cwf6, cwf7/spf27, cwf8, cwf9, cwf10, cwf11, cwf12, prp45/cwf13, cwf14, cwf15, cwf16, cwf17, cwf18, cwf19, cwf20, cwf21, cwf22, cwf23, cwf24, cwf25, cwf26, cyp7/cwf27, cwf28, cwf29/ist3, lea1, msl1, prp5/cwf1, prp10, prp12/sap130, prp17, prp22, sap61, sap62, sap114, sap145, slu7, smb1, smd1, smd3, smf1, smg1 and syf2. Interacts with saf5; the interaction is direct.

It localises to the nucleus. The protein localises to the cytoplasm. The protein resides in the cytosol. In terms of biological role, plays a role in pre-mRNA splicing as a core component of the spliceosomal U1, U2, U4 and U5 small nuclear ribonucleoproteins (snRNPs), the building blocks of the spliceosome. The sequence is that of Small nuclear ribonucleoprotein Sm D3 (smd3) from Schizosaccharomyces pombe (strain 972 / ATCC 24843) (Fission yeast).